The following is a 165-amino-acid chain: Cyclic pyranopterin monophosphate synthase (165 aa).

Substrate contacts are provided by residues 78–80 (LCH) and 116–117 (ME). Asp-131 is a catalytic residue.

This sequence belongs to the MoaC family. As to quaternary structure, homohexamer; trimer of dimers.

The catalysed reaction is (8S)-3',8-cyclo-7,8-dihydroguanosine 5'-triphosphate = cyclic pyranopterin phosphate + diphosphate. The protein operates within cofactor biosynthesis; molybdopterin biosynthesis. Its function is as follows. Catalyzes the conversion of (8S)-3',8-cyclo-7,8-dihydroguanosine 5'-triphosphate to cyclic pyranopterin monophosphate (cPMP). The chain is Cyclic pyranopterin monophosphate synthase from Sinorhizobium fredii (strain NBRC 101917 / NGR234).